A 206-amino-acid polypeptide reads, in one-letter code: Small ribosomal subunit protein uS4 (206 aa).

Positions 96–156 constitute an S4 RNA-binding domain; sequence TRLDNVVYRM…EKSQKQARIK (61 aa).

The protein belongs to the universal ribosomal protein uS4 family. Part of the 30S ribosomal subunit. Contacts protein S5. The interaction surface between S4 and S5 is involved in control of translational fidelity.

Its function is as follows. One of the primary rRNA binding proteins, it binds directly to 16S rRNA where it nucleates assembly of the body of the 30S subunit. With S5 and S12 plays an important role in translational accuracy. The chain is Small ribosomal subunit protein uS4 from Shewanella loihica (strain ATCC BAA-1088 / PV-4).